Consider the following 257-residue polypeptide: Snake venom serine protease Haly-2 (257 aa).

Positions 1-18 are cleaved as a signal peptide; it reads MVLIRVLANLLILQLSYA. The propeptide occupies 19-24; it reads QKSSEL. The 224-residue stretch at 25–248 folds into the Peptidase S1 domain; sequence IIGGDECNIN…HLEWIRSIIA (224 aa). Intrachain disulfides connect Cys-31–Cys-162, Cys-49–Cys-65, Cys-97–Cys-255, Cys-141–Cys-209, Cys-173–Cys-188, and Cys-199–Cys-224. Residue His-64 is the Charge relay system of the active site. Asn-100 carries N-linked (GlcNAc...) asparagine glycosylation. Asp-109 (charge relay system) is an active-site residue. Residue Ser-203 is the Charge relay system of the active site.

Belongs to the peptidase S1 family. Snake venom subfamily. In terms of assembly, monomer. Expressed by the venom gland.

It localises to the secreted. Functionally, snake venom serine protease that may act in the hemostasis system of the prey. The polypeptide is Snake venom serine protease Haly-2 (Gloydius brevicauda (Korean slamosa snake)).